The following is a 130-amino-acid chain: Small ribosomal subunit protein uS11 (130 aa).

Belongs to the universal ribosomal protein uS11 family. Part of the 30S ribosomal subunit. Interacts with proteins S7 and S18. Binds to IF-3.

Located on the platform of the 30S subunit, it bridges several disparate RNA helices of the 16S rRNA. Forms part of the Shine-Dalgarno cleft in the 70S ribosome. This chain is Small ribosomal subunit protein uS11, found in Xanthomonas oryzae pv. oryzae (strain MAFF 311018).